The primary structure comprises 416 residues: Enolase (416 aa).

A (2R)-2-phosphoglycerate-binding site is contributed by Q160. Residue E204 is the Proton donor of the active site. Mg(2+)-binding residues include D239, E280, and D306. 4 residues coordinate (2R)-2-phosphoglycerate: K331, R360, S361, and K382. K331 (proton acceptor) is an active-site residue.

The protein belongs to the enolase family. Requires Mg(2+) as cofactor.

The protein resides in the cytoplasm. It is found in the secreted. The protein localises to the cell surface. The catalysed reaction is (2R)-2-phosphoglycerate = phosphoenolpyruvate + H2O. It participates in carbohydrate degradation; glycolysis; pyruvate from D-glyceraldehyde 3-phosphate: step 4/5. In terms of biological role, catalyzes the reversible conversion of 2-phosphoglycerate (2-PG) into phosphoenolpyruvate (PEP). It is essential for the degradation of carbohydrates via glycolysis. This is Enolase from Sulfurisphaera tokodaii (strain DSM 16993 / JCM 10545 / NBRC 100140 / 7) (Sulfolobus tokodaii).